The primary structure comprises 357 residues: N-acetyl-gamma-glutamyl-phosphate reductase (357 aa).

Residue Cys151 is part of the active site.

The protein belongs to the NAGSA dehydrogenase family. Type 1 subfamily.

It is found in the cytoplasm. It catalyses the reaction N-acetyl-L-glutamate 5-semialdehyde + phosphate + NADP(+) = N-acetyl-L-glutamyl 5-phosphate + NADPH + H(+). It functions in the pathway amino-acid biosynthesis; L-arginine biosynthesis; N(2)-acetyl-L-ornithine from L-glutamate: step 3/4. Functionally, catalyzes the NADPH-dependent reduction of N-acetyl-5-glutamyl phosphate to yield N-acetyl-L-glutamate 5-semialdehyde. This chain is N-acetyl-gamma-glutamyl-phosphate reductase, found in Corynebacterium kroppenstedtii (strain DSM 44385 / JCM 11950 / CIP 105744 / CCUG 35717).